A 411-amino-acid polypeptide reads, in one-letter code: Lysosome-associated membrane glycoprotein 3 (411 aa).

Residues 1–21 (MPGQISAVAVLFLSLTVILHG) form the signal peptide. Topologically, residues 22-376 (YQIREKEFPK…NVNECLSDYT (355 aa)) are lumenal. Over residues 172 to 192 (HKSTTNQRPTLSTNVLGTSTP) the composition is skewed to polar residues. The interval 172–204 (HKSTTNQRPTLSTNVLGTSTPTHKDRSTTSPVP) is disordered. N-linked (GlcNAc...) asparagine glycosylation occurs at N227. Disulfide bonds link C232/C269 and C334/C371. The chain crosses the membrane as a helical span at residues 377-397 (VVLPMVAIIVVVICVVGLSVY). Residues 398–411 (KIRQRHQSSAYQRI) are Cytoplasmic-facing.

The protein belongs to the LAMP family. Monomer. Interacts with FURIN.

It localises to the cell surface. The protein resides in the lysosome membrane. It is found in the cytoplasmic vesicle membrane. Its subcellular location is the early endosome membrane. Its function is as follows. Lysosomal membrane glycoprotein which plays a role in the unfolded protein response (UPR) that contributes to protein degradation and cell survival during proteasomal dysfunction. Plays a role in the process of fusion of the lysosome with the autophagosome, thereby modulating the autophagic process. Promotes hepatocellular lipogenesis through activation of the PI3K/Akt pathway. May also play a role in dendritic cell function and in adaptive immunity. In Mus musculus (Mouse), this protein is Lysosome-associated membrane glycoprotein 3 (Lamp3).